The sequence spans 286 residues: Meiotically up-regulated gene 64 protein (286 aa).

The protein resides in the cytoplasm. Functionally, has a role in meiosis. The polypeptide is Meiotically up-regulated gene 64 protein (mug64) (Schizosaccharomyces pombe (strain 972 / ATCC 24843) (Fission yeast)).